The following is a 303-amino-acid chain: Crk-like protein (303 aa).

The SH2 domain occupies 14–102 (WYMGPVSRQE…LDTTTLIEPA (89 aa)). Positions 123 to 183 (ENLEYVRTLY…PVPYVEKLVR (61 aa)) constitute an SH3 1 domain. Tyr-127 is modified (phosphotyrosine). Residues 184-204 (SSPHGKHGNRNSNSYGIPEPA) form a disordered region. Tyr-207 is subject to Phosphotyrosine. Residues 235 to 296 (NGPVFAKAIQ…PFTHVKIFDP (62 aa)) form the SH3 2 domain.

The protein belongs to the CRK family. Interacts with INPP5D/SHIP1. Interacts with DOCK2 and EPOR. Interacts with phosphorylated CBLB and IRS4. Interacts with BCAR1/CAS and NEDD9/HEF1.

Its function is as follows. May mediate the transduction of intracellular signals. The chain is Crk-like protein from Rattus norvegicus (Rat).